The following is a 235-amino-acid chain: tRNA (guanine-N(1)-)-methyltransferase (235 aa).

S-adenosyl-L-methionine-binding positions include Gly114 and 134 to 139 (IGDYIL).

The protein belongs to the RNA methyltransferase TrmD family. In terms of assembly, homodimer.

The protein localises to the cytoplasm. The catalysed reaction is guanosine(37) in tRNA + S-adenosyl-L-methionine = N(1)-methylguanosine(37) in tRNA + S-adenosyl-L-homocysteine + H(+). Functionally, specifically methylates guanosine-37 in various tRNAs. The protein is tRNA (guanine-N(1)-)-methyltransferase of Ehrlichia ruminantium (strain Gardel).